A 404-amino-acid chain; its full sequence is Cysteine desulfurase IscS (404 aa).

Pyridoxal 5'-phosphate is bound by residues 75–76 (AT), N155, Q183, and 203–205 (SGH). K206 is modified (N6-(pyridoxal phosphate)lysine). T243 is a binding site for pyridoxal 5'-phosphate. The Cysteine persulfide intermediate role is filled by C328. C328 is a binding site for [2Fe-2S] cluster.

This sequence belongs to the class-V pyridoxal-phosphate-dependent aminotransferase family. NifS/IscS subfamily. As to quaternary structure, homodimer. Forms a heterotetramer with IscU, interacts with other sulfur acceptors. Requires pyridoxal 5'-phosphate as cofactor.

It localises to the cytoplasm. It catalyses the reaction (sulfur carrier)-H + L-cysteine = (sulfur carrier)-SH + L-alanine. Its pathway is cofactor biosynthesis; iron-sulfur cluster biosynthesis. Functionally, master enzyme that delivers sulfur to a number of partners involved in Fe-S cluster assembly, tRNA modification or cofactor biosynthesis. Catalyzes the removal of elemental sulfur and selenium atoms from cysteine and selenocysteine to produce alanine. Functions as a sulfur delivery protein for Fe-S cluster synthesis onto IscU, an Fe-S scaffold assembly protein, as well as other S acceptor proteins. Also functions as a selenium delivery protein in the pathway for the biosynthesis of selenophosphate. The chain is Cysteine desulfurase IscS from Salmonella paratyphi C (strain RKS4594).